A 353-amino-acid polypeptide reads, in one-letter code: Paraneoplastic antigen Ma1 homolog (353 aa).

The protein belongs to the PNMA family. In terms of tissue distribution, predominantly expressed in testis. Very low levels in the brain, including in the piriform cortex, hippocampus and some subcortical nuclei.

The protein localises to the nucleus. The protein resides in the nucleolus. The sequence is that of Paraneoplastic antigen Ma1 homolog (Pnma1) from Mus musculus (Mouse).